Reading from the N-terminus, the 457-residue chain is MDHLPIFCQLRDRDCLIVGGGDVAERKARLLLDAGARLTVNALAFIPQFTAWADAGMLTLVEGPFDESLLDTCWLAIAATDDDTLNQRVSEAAEARRIFCNVVDAPKAASFIMPSIIDRSPLMVAVSSGGTSPVLARLLREKLESLLPLHLGQVAKYAGQLRGRVKQQFTTMSERRRFWEKLFVNDRLAQSLANNDQKAITETTEQLINEPLDHRGEVVLVGAGPGDAGLLTLKGLQQIQQADVVVYDRLVSDDIMNLVRRDADRVFVGKRAGYHCVPQEEINQILLREAQKGKRVVRLKGGDPFIFGRGGEELETLCNAGIPFSVVPGITAASGCSAYSGIPLTHRDYAQSVRLITGHLKTGGELDWENLAAEKQTLVFYMGLNQAATIQQKLIEHGMPGEMPVAIVENGTAVTQRVIDGTLTQLGELAQQMNSPSLIIIGRVVGLRDKLNWFSNH.

Residues 1–204 (MDHLPIFCQL…NDQKAITETT (204 aa)) form a precorrin-2 dehydrogenase /sirohydrochlorin ferrochelatase region. NAD(+)-binding positions include 22 to 23 (DV) and 43 to 44 (LA). Ser128 is subject to Phosphoserine. A uroporphyrinogen-III C-methyltransferase region spans residues 216–457 (GEVVLVGAGP…RDKLNWFSNH (242 aa)). Position 225 (Pro225) interacts with S-adenosyl-L-methionine. The active-site Proton acceptor is Asp248. The active-site Proton donor is the Lys270. S-adenosyl-L-methionine contacts are provided by residues 301–303 (GGD), Ile306, 331–332 (TA), Met382, and Gly411.

This sequence in the N-terminal section; belongs to the precorrin-2 dehydrogenase / sirohydrochlorin ferrochelatase family. In the C-terminal section; belongs to the precorrin methyltransferase family.

The catalysed reaction is uroporphyrinogen III + 2 S-adenosyl-L-methionine = precorrin-2 + 2 S-adenosyl-L-homocysteine + H(+). The enzyme catalyses precorrin-2 + NAD(+) = sirohydrochlorin + NADH + 2 H(+). It carries out the reaction siroheme + 2 H(+) = sirohydrochlorin + Fe(2+). It functions in the pathway cofactor biosynthesis; adenosylcobalamin biosynthesis; precorrin-2 from uroporphyrinogen III: step 1/1. It participates in cofactor biosynthesis; adenosylcobalamin biosynthesis; sirohydrochlorin from precorrin-2: step 1/1. Its pathway is porphyrin-containing compound metabolism; siroheme biosynthesis; precorrin-2 from uroporphyrinogen III: step 1/1. The protein operates within porphyrin-containing compound metabolism; siroheme biosynthesis; siroheme from sirohydrochlorin: step 1/1. It functions in the pathway porphyrin-containing compound metabolism; siroheme biosynthesis; sirohydrochlorin from precorrin-2: step 1/1. Multifunctional enzyme that catalyzes the SAM-dependent methylations of uroporphyrinogen III at position C-2 and C-7 to form precorrin-2 via precorrin-1. Then it catalyzes the NAD-dependent ring dehydrogenation of precorrin-2 to yield sirohydrochlorin. Finally, it catalyzes the ferrochelation of sirohydrochlorin to yield siroheme. This is Siroheme synthase from Shigella boydii serotype 18 (strain CDC 3083-94 / BS512).